We begin with the raw amino-acid sequence, 155 residues long: Probable tellurium resistance transcriptional regulator TerW (155 aa).

Functionally, involved in tellurite resistance. TerW binds specifically to the potential promoter region of the terZABCDE operon and probably regulates expression of the genes. This Escherichia coli protein is Probable tellurium resistance transcriptional regulator TerW.